A 348-amino-acid chain; its full sequence is Matrix protein (348 aa).

The YLDL motif signature appears at 50–53 (YLDL). Ser70 carries the phosphoserine; by host modification.

The protein belongs to the morbillivirus/respirovirus/rubulavirus M protein family. In terms of assembly, homomultimer. Binds to the cytoplasmic regions of F and HN proteins. Interacts with nucleocapsid. Interacts with human alpha-tubulin and beta-tubulin. Interacts with host ANP32B. A large portion is phosphorylated in the cytoplasm, but not in virion. However, this phosphorylation is not essential for virus replication.

It is found in the virion. Its subcellular location is the host cytoplasm. The protein resides in the host cell membrane. Plays a crucial role in virion assembly and budding. Forms a shell at the inner face of the plasma membrane and concentrates the HN and F glycoproteins. Acts as a negative regulator for transcription and replication by sticking to the nucleocapsid. This effect might be regulated by the cytoplasmic interaction with tubulin that dissociates the M protein from the nucleocapsid. This is Matrix protein (M) from Cavia cutleri (Guinea pig).